The following is a 515-amino-acid chain: MTTPYKHEPFTNFQDQNNVEAFKKALATVSEYLGKDYPLVINGERVETEAKIVSINPADKEEVVGRVSKASQEHAEQAIQAAAKAFEEWRYTSPEERAAVLFRAAAKVRRRKHEFSALLVKEAGKPWNEADADTAEAIDFMEYYARQMIELAKGKPVNSREGEKNQYVYTPTGVTVVIPPWNFLFAIMAGTTVAPIVTGNTVVLKPASATPVIAAKFVEVLEESGLPKGVVNFVPGSGAEVGDYLVDHPKTSLITFTGSREVGTRIFERAAKVQPGQQHLKRVIAEMGGKDTVVVDEDADIELAAQSIFTSAFGFAGQKCSAGSRAVVHEKVYDQVLERVIEITESKVTAKPDSADVYMGPVIDQGSYDKIMSYIEIGKQEGRLVSGGTGDDSKGYFIKPTIFADLDPKARLMQEEIFGPVVAFCKVSDFDEALEVANNTEYGLTGAVITNNRKHIERAKQEFHVGNLYFNRNCTGAIVGYHPFGGFKMSGTDSKAGGPDYLALHMQAKTISEMF.

Catalysis depends on residues Glu-286 and Cys-320.

This sequence belongs to the aldehyde dehydrogenase family. RocA subfamily.

The catalysed reaction is L-glutamate 5-semialdehyde + NAD(+) + H2O = L-glutamate + NADH + 2 H(+). It functions in the pathway amino-acid degradation; L-proline degradation into L-glutamate; L-glutamate from L-proline: step 2/2. Functionally, important for the use of proline as a sole carbon and energy source or a sole nitrogen source. The protein is 1-pyrroline-5-carboxylate dehydrogenase 2 of Bacillus subtilis (strain 168).